The primary structure comprises 93 residues: Beta-defensin 128 (93 aa).

An N-terminal signal peptide occupies residues 1 to 18; the sequence is MKLFLVLIILLFEVLTDG. Disulfide bonds link C24–C52, C32–C46, and C36–C53.

This sequence belongs to the beta-defensin family.

It is found in the secreted. In terms of biological role, has antibacterial activity. This is Beta-defensin 128 (DEFB128) from Homo sapiens (Human).